Here is an 852-residue protein sequence, read N- to C-terminus: Disks large homolog 2 (852 aa).

2 S-palmitoyl cysteine lipidation sites follow: C5 and C7. S28 bears the Phosphoserine mark. Y58 is modified (phosphotyrosine). S65 bears the Phosphoserine mark. 2 PDZ domains span residues 98–185 and 193–280; these read EITL…RRRR and EIKL…GKPT. Phosphoserine occurs at positions 307, 328, 360, 365, 406, and 414. One can recognise a PDZ 3 domain in the interval 421–502; sequence KVVLHKGSTG…TVTIIAQYQP (82 aa). Y505 carries the post-translational modification Phosphotyrosine. S528, S530, and S553 each carry phosphoserine. The SH3 domain maps to 536–606; sequence KRSLYVRAMF…PSKRRVERKE (71 aa). The region spanning 662 to 837 is the Guanylate kinase-like domain; that stretch reads TRPVIILGPM…IYNQCKLVIE (176 aa). 2 positions are modified to phosphotyrosine: Y732 and Y737.

Interacts with NOS1/nNOS through second PDZ domain. Interacts with KCNJ2/Kir2.1 (via C-terminus) through one of its PDZ domains. Interacts with KCNJ4. Interacts with FRMPD4 (via C-terminus). Interacts through its PDZ domains with NETO1. Interacts with LRFN1, LRFN2 and LRFN4. Interacts with FASLG. Interacts with KCNJ4. Interacts with ADAM22. Interacts with DGKI (via PDZ-binding motif). In terms of processing, palmitoylation of isoform 1 and isoform 2 is not required for targeting to postsynaptic density. In terms of tissue distribution, brain. Highest levels of isoform 1 in cortex, olfactory bulb, thalamus, hypothalamus, striatum and hippocampus. Highest level of isoform 2 in olfactory bulb. Reduced levels in cortex and hippocampus. Highest level of isoform 4 in spinal cord. Low levels of isoform 4, isoform 6, and isoform 7 in superior cervical ganglion.

The protein resides in the cell membrane. It localises to the postsynaptic density. Its subcellular location is the synapse. It is found in the membrane. The protein localises to the cell projection. The protein resides in the axon. It localises to the perikaryon. Its function is as follows. Required for perception of chronic pain through NMDA receptor signaling. Regulates surface expression of NMDA receptors in dorsal horn neurons of the spinal cord. Interacts with the cytoplasmic tail of NMDA receptor subunits as well as inward rectifying potassium channels. Involved in regulation of synaptic stability at cholinergic synapses. Part of the postsynaptic protein scaffold of excitatory synapses. In Mus musculus (Mouse), this protein is Disks large homolog 2 (Dlg2).